Reading from the N-terminus, the 155-residue chain is SsrA-binding protein (155 aa).

It belongs to the SmpB family.

Its subcellular location is the cytoplasm. In terms of biological role, required for rescue of stalled ribosomes mediated by trans-translation. Binds to transfer-messenger RNA (tmRNA), required for stable association of tmRNA with ribosomes. tmRNA and SmpB together mimic tRNA shape, replacing the anticodon stem-loop with SmpB. tmRNA is encoded by the ssrA gene; the 2 termini fold to resemble tRNA(Ala) and it encodes a 'tag peptide', a short internal open reading frame. During trans-translation Ala-aminoacylated tmRNA acts like a tRNA, entering the A-site of stalled ribosomes, displacing the stalled mRNA. The ribosome then switches to translate the ORF on the tmRNA; the nascent peptide is terminated with the 'tag peptide' encoded by the tmRNA and targeted for degradation. The ribosome is freed to recommence translation, which seems to be the essential function of trans-translation. The protein is SsrA-binding protein of Lawsonia intracellularis (strain PHE/MN1-00).